Consider the following 292-residue polypeptide: NAD kinase (292 aa).

Asp73 serves as the catalytic Proton acceptor. NAD(+)-binding positions include 73–74 (DG), 147–148 (NE), His158, Arg175, Asp177, 188–193 (TGYSLS), and Gln248.

Belongs to the NAD kinase family. Requires a divalent metal cation as cofactor.

The protein resides in the cytoplasm. It carries out the reaction NAD(+) + ATP = ADP + NADP(+) + H(+). Involved in the regulation of the intracellular balance of NAD and NADP, and is a key enzyme in the biosynthesis of NADP. Catalyzes specifically the phosphorylation on 2'-hydroxyl of the adenosine moiety of NAD to yield NADP. In Buchnera aphidicola subsp. Baizongia pistaciae (strain Bp), this protein is NAD kinase.